Consider the following 79-residue polypeptide: Ornithine decarboxylase (79 aa).

Pyridoxal 5'-phosphate-binding positions include Ser8, Gly45, and 75–78 (EPGR).

The protein belongs to the Orn/Lys/Arg decarboxylase class-II family. As to quaternary structure, homodimer. Only the dimer is catalytically active, as the active sites are constructed of residues from both monomers. Pyridoxal 5'-phosphate is required as a cofactor.

The protein resides in the cytoplasm. The catalysed reaction is L-ornithine + H(+) = putrescine + CO2. The protein operates within amine and polyamine biosynthesis; putrescine biosynthesis via L-ornithine pathway; putrescine from L-ornithine: step 1/1. Inhibited by antizyme (AZ) OAZ1 in response to polyamine levels. AZ inhibits the assembly of the functional homodimer by binding to ODC monomers and targeting them for ubiquitin-independent proteolytic destruction by the 26S proteasome. Its function is as follows. Catalyzes the first and rate-limiting step of polyamine biosynthesis that converts ornithine into putrescine, which is the precursor for the polyamines, spermidine and spermine. Polyamines are essential for cell proliferation and are implicated in cellular processes, ranging from DNA replication to apoptosis. This is Ornithine decarboxylase (ODC) from Paracoccidioides brasiliensis.